Here is a 294-residue protein sequence, read N- to C-terminus: Lysozyme M1 (294 aa).

Residues 81–294 (GVQGIDVSHW…RLLALANNTA (214 aa)) form the Ch-type lysozyme domain. Active-site residues include aspartate 86, aspartate 175, and glutamate 177. Cysteine 185 and cysteine 224 form a disulfide bridge.

Belongs to the glycosyl hydrolase 25 family.

It localises to the secreted. The catalysed reaction is Hydrolysis of (1-&gt;4)-beta-linkages between N-acetylmuramic acid and N-acetyl-D-glucosamine residues in a peptidoglycan and between N-acetyl-D-glucosamine residues in chitodextrins.. In terms of biological role, this enzyme has both lysozyme (acetylmuramidase) and diacetylmuramidase activities. The chain is Lysozyme M1 (acm) from Streptomyces globisporus.